The primary structure comprises 179 residues: Ribosome maturation factor RimP (179 aa).

The protein belongs to the RimP family.

The protein localises to the cytoplasm. Its function is as follows. Required for maturation of 30S ribosomal subunits. In Chlorobium chlorochromatii (strain CaD3), this protein is Ribosome maturation factor RimP.